A 247-amino-acid chain; its full sequence is uncharacterized protein (247 aa).

Positions 19, 38, 63, and 64 each coordinate NAD(+). Residue S142 participates in substrate binding. 3 residues coordinate NAD(+): Y155, K159, and S190. Residue Y155 is the Proton acceptor of the active site.

It belongs to the short-chain dehydrogenases/reductases (SDR) family.

This is an uncharacterized protein from Mycobacterium bovis (strain ATCC BAA-935 / AF2122/97).